The sequence spans 184 residues: Large ribosomal subunit protein uL5 (184 aa).

This sequence belongs to the universal ribosomal protein uL5 family. Part of the 50S ribosomal subunit; part of the 5S rRNA/L5/L18/L25 subcomplex. Contacts the 5S rRNA and the P site tRNA. Forms a bridge to the 30S subunit in the 70S ribosome.

This is one of the proteins that bind and probably mediate the attachment of the 5S RNA into the large ribosomal subunit, where it forms part of the central protuberance. In the 70S ribosome it contacts protein S13 of the 30S subunit (bridge B1b), connecting the 2 subunits; this bridge is implicated in subunit movement. Contacts the P site tRNA; the 5S rRNA and some of its associated proteins might help stabilize positioning of ribosome-bound tRNAs. In Wolinella succinogenes (strain ATCC 29543 / DSM 1740 / CCUG 13145 / JCM 31913 / LMG 7466 / NCTC 11488 / FDC 602W) (Vibrio succinogenes), this protein is Large ribosomal subunit protein uL5.